Reading from the N-terminus, the 324-residue chain is tRNA-modifying protein YgfZ (324 aa).

Folate is bound at residue Trp-184.

The protein belongs to the tRNA-modifying YgfZ family.

It localises to the cytoplasm. In terms of biological role, folate-binding protein involved in regulating the level of ATP-DnaA and in the modification of some tRNAs. It is probably a key factor in regulatory networks that act via tRNA modification, such as initiation of chromosomal replication. The sequence is that of tRNA-modifying protein YgfZ from Vibrio vulnificus (strain YJ016).